A 549-amino-acid polypeptide reads, in one-letter code: MTSHQPQPQEEQSPQRSTSGYPLQEVVDDEVSGPSAPGVDPSPPRRSLGCKRKRECLDESDDEPEKELAPEPEETWVAETLCGLKMKAKRRRVSLVLPEYYEAFNRLLAPGVDPSPPRRSLGCKRKRECLDESDDEPEKELAPEPEETWVAETLCGLKMKAKRRRVSLVLPEYYEAFNRLLAPGVDPSPPRRSLGCKRKRECLDESDDEPEKELAPEPEETWVAETLCGLKMKAKRRRVSLVLPEYYEAFNRLLAPGVDPSPPRRSLGCKRKRECLDESDDEPEKELAPEPEETWVAETLCGLKMKAKRRRVSLVLPEYYEAFNRLLAPGVDPSPPRRSLGCKRKRECLDESDDEPEKELAPEPEETWVAETLCGLKMKAKRRRVSLVLPEYYEAFNRLLEDPVIKRFLAWDKDLRVSDKYLLAMVIAYFSRAGLPSWQYQRIHFFLALYLANDMEEDDEAPKQKIFYFLYGKTHSHIPLRPKHWFQLCRPMNPRARKNCSQIALFQKRRFQFFCSMRCRAWVSPEELEEIQAYDPEHWVWARDRAHLS.

Positions 1–15 (MTSHQPQPQEEQSPQ) are enriched in low complexity. Disordered regions lie at residues 1-74 (MTSH…EPEE), 126-145 (KREC…APEP), 188-218 (SPPR…APEP), 261-291 (SPPR…APEP), and 334-364 (SPPR…APEP). Acidic residues-rich tracts occupy residues 58–74 (DESD…EPEE), 131–145 (DESD…APEP), 204–218 (DESD…APEP), 277–291 (DESD…APEP), and 350–364 (DESD…APEP).

This sequence belongs to the Speedy/Ringo family. As to expression, predominantly expressed in testis and spleen.

The chain is Speedy protein E3 from Homo sapiens (Human).